Reading from the N-terminus, the 175-residue chain is Co-chaperone protein HscB homolog (175 aa).

The J domain occupies 2-74 (NYFQLFNIEV…LQRAEYILVQ (73 aa)).

Belongs to the HscB family. Interacts with HscA and stimulates its ATPase activity.

Co-chaperone involved in the maturation of iron-sulfur cluster-containing proteins. Seems to help targeting proteins to be folded toward HscA. This chain is Co-chaperone protein HscB homolog, found in Colwellia psychrerythraea (strain 34H / ATCC BAA-681) (Vibrio psychroerythus).